The primary structure comprises 705 residues: MVNAILMACILAGIFVGMFNEVDGIQILSKSKLEKCEKTSDSGNLNCSTKIVLNLAVPSGSSGGEASIVAEIVEVEDNSSSNMQTVRIPPVITVNKSAAYALYDLTYIRDVPYKPQEYHVTTRKCEHDAGPDIVQICERLRDEKGNVLEQTQPICCPCGPQRRMPSSCGDIFDKMIKGKANTAHCLRFPGDWFHVFGIGQRSLGFSVRVELKTGTRVSEVIIGPENRTATANDNFLKVNLIGDFGGYTSIPSFEDFYLVIPREAAEAGQPGSLGANYSMWMLLERVRFTLDGLECNKIGVGYEAFNTQPNFCSSPYWSCLHNQLWNFRESDINRIDRHQLPLYGLEGRFERINQHPNAGPHSFSIGVTETLNTNLMIELRADDIEYVFQRSPGKIINIAIPTFEALTQFGVAAVIIKNTGEVEASYSLTFDCSKGVAFVEEQFFIIKPKAVTTRSFKLYPTKDQAAKYICTAILKDSQFSEVDRAECQFSTTATVLDNGTQVTNPFQIPETQPKGFFDSIRILWTKIINGLVDFITGDTCRNKCSSFFDFSCHIQYVCLSWMVMFGLLLALFPITCLLLWLLHQKGLFDPCYDWWEDHFDLDHHRRLLPSRADVVNRHHHHHKHRHHHNHHRRTHQRHKHHHGQDDDVLQKMMLERDHSDSHYYHQLHRVHKDSKQKQRRRAKHGIVLPRDVHVERQRKQRLRES.

The first 24 residues, 1-24, serve as a signal peptide directing secretion; sequence MVNAILMACILAGIFVGMFNEVDG. The Extracellular segment spans residues 25–561; it reads IQILSKSKLE…CHIQYVCLSW (537 aa). A disulfide bridge links cysteine 36 with cysteine 47. N-linked (GlcNAc...) asparagine glycosylation is found at asparagine 46, asparagine 78, and asparagine 95. Cystine bridges form between cysteine 125–cysteine 155, cysteine 137–cysteine 185, cysteine 156–cysteine 312, cysteine 158–cysteine 168, cysteine 295–cysteine 319, and cysteine 432–cysteine 470. Asparagine 226 and asparagine 276 each carry an N-linked (GlcNAc...) asparagine glycan. N-linked (GlcNAc...) asparagine glycosylation is present at asparagine 498. Residues 562–582 form a helical membrane-spanning segment; that stretch reads MVMFGLLLALFPITCLLLWLL. The Cytoplasmic segment spans residues 583–705; sequence HQKGLFDPCY…RQRKQRLRES (123 aa). Basic residues-rich tracts occupy residues 617-642 and 668-684; these read RHHH…KHHH and HRVH…RAKH. Disordered stretches follow at residues 617–646 and 668–705; these read RHHH…GQDD and HRVH…LRES. Positions 690–705 are enriched in basic and acidic residues; it reads RDVHVERQRKQRLRES.

It belongs to the HAP2/GCS1 family. As to expression, expressed only in mature pollen, in the two sperm cells.

It localises to the endoplasmic reticulum membrane. The protein resides in the cell membrane. Functionally, required for male fertility. Plays a role in pollen tube guidance and successful gamete attachment. Essential for the fusion of gametes during double fertilization, where one male gamete fuses with the egg to produce a zygote, and another male gamete fuses with the central cell to produce the endosperm. Mediates the fusion of cell membranes. Not required for pollen tube outgrowth. In Arabidopsis thaliana (Mouse-ear cress), this protein is Protein HAPLESS 2 (HAP2).